Reading from the N-terminus, the 145-residue chain is D-aminoacyl-tRNA deacylase (145 aa).

A Gly-cisPro motif, important for rejection of L-amino acids motif is present at residues 137 to 138 (GP).

This sequence belongs to the DTD family. Homodimer.

It localises to the cytoplasm. The enzyme catalyses glycyl-tRNA(Ala) + H2O = tRNA(Ala) + glycine + H(+). It carries out the reaction a D-aminoacyl-tRNA + H2O = a tRNA + a D-alpha-amino acid + H(+). An aminoacyl-tRNA editing enzyme that deacylates mischarged D-aminoacyl-tRNAs. Also deacylates mischarged glycyl-tRNA(Ala), protecting cells against glycine mischarging by AlaRS. Acts via tRNA-based rather than protein-based catalysis; rejects L-amino acids rather than detecting D-amino acids in the active site. By recycling D-aminoacyl-tRNA to D-amino acids and free tRNA molecules, this enzyme counteracts the toxicity associated with the formation of D-aminoacyl-tRNA entities in vivo and helps enforce protein L-homochirality. This Legionella pneumophila (strain Paris) protein is D-aminoacyl-tRNA deacylase.